A 405-amino-acid polypeptide reads, in one-letter code: Serine/threonine-protein kinase SSN3 (405 aa).

A Protein kinase domain is found at Tyr-40–Phe-350. ATP is bound by residues Ile-46–Val-54 and Lys-71. Asp-173 functions as the Proton acceptor in the catalytic mechanism. A disordered region spans residues Asp-377 to Lys-405. The segment covering Lys-381 to Gly-391 has biased composition (polar residues).

Belongs to the protein kinase superfamily. CMGC Ser/Thr protein kinase family. CDC2/CDKX subfamily. In terms of assembly, component of the srb8-11 complex, a regulatory module of the Mediator complex. It depends on Mg(2+) as a cofactor.

The protein resides in the nucleus. It carries out the reaction L-seryl-[protein] + ATP = O-phospho-L-seryl-[protein] + ADP + H(+). The catalysed reaction is L-threonyl-[protein] + ATP = O-phospho-L-threonyl-[protein] + ADP + H(+). The enzyme catalyses [DNA-directed RNA polymerase] + ATP = phospho-[DNA-directed RNA polymerase] + ADP + H(+). Functionally, component of the srb8-11 complex. The srb8-11 complex is a regulatory module of the Mediator complex which is itself dependent transcription. The srb8-11 complex may be involved in the transcriptional repression of a subset of genes regulated by Mediator. It may inhibit the association of the Mediator complex with RNA polymerase II to form the holoenzyme complex. The srb8-11 complex phosphorylates the C-terminal domain (CTD) of the largest subunit of RNA polymerase II. In Yarrowia lipolytica (strain CLIB 122 / E 150) (Yeast), this protein is Serine/threonine-protein kinase SSN3 (SSN3).